A 339-amino-acid chain; its full sequence is Anthranilate phosphoribosyltransferase (339 aa).

5-phospho-alpha-D-ribose 1-diphosphate-binding positions include G80, 83–84 (GD), 90–93 (NVST), 108–116 (KHGNRSVTS), and S120. G80 contacts anthranilate. Residue S92 participates in Mg(2+) binding. N111 contributes to the anthranilate binding site. Residue R166 participates in anthranilate binding. Mg(2+)-binding residues include D225 and E226.

The protein belongs to the anthranilate phosphoribosyltransferase family. In terms of assembly, homodimer. It depends on Mg(2+) as a cofactor.

The catalysed reaction is N-(5-phospho-beta-D-ribosyl)anthranilate + diphosphate = 5-phospho-alpha-D-ribose 1-diphosphate + anthranilate. Its pathway is amino-acid biosynthesis; L-tryptophan biosynthesis; L-tryptophan from chorismate: step 2/5. Functionally, catalyzes the transfer of the phosphoribosyl group of 5-phosphorylribose-1-pyrophosphate (PRPP) to anthranilate to yield N-(5'-phosphoribosyl)-anthranilate (PRA). The polypeptide is Anthranilate phosphoribosyltransferase (Ignicoccus hospitalis (strain KIN4/I / DSM 18386 / JCM 14125)).